A 380-amino-acid polypeptide reads, in one-letter code: Magnesium-protoporphyrin IX monomethyl ester [oxidative] cyclase 1 (380 aa).

This sequence belongs to the AcsF family. It depends on Fe cation as a cofactor.

The enzyme catalyses Mg-protoporphyrin IX 13-monomethyl ester + 3 NADPH + 3 O2 + 2 H(+) = 3,8-divinyl protochlorophyllide a + 3 NADP(+) + 5 H2O. It functions in the pathway porphyrin-containing compound metabolism; chlorophyll biosynthesis (light-independent). Catalyzes the formation of the isocyclic ring in chlorophyll biosynthesis. Mediates the cyclase reaction, which results in the formation of divinylprotochlorophyllide (Pchlide) characteristic of all chlorophylls from magnesium-protoporphyrin IX 13-monomethyl ester (MgPMME). The polypeptide is Magnesium-protoporphyrin IX monomethyl ester [oxidative] cyclase 1 (Thermosynechococcus vestitus (strain NIES-2133 / IAM M-273 / BP-1)).